The chain runs to 178 residues: Nascent polypeptide-associated complex subunit alpha (178 aa).

In terms of domain architecture, NAC-A/B spans 16–80 (PKNEKKAREL…AKVDDMNQRI (65 aa)). A compositionally biased stretch (low complexity) spans 82–100 (EAQAQQAQQEALQKAAADA). The segment at 82–145 (EAQAQQAQQE…DETGLDPKDI (64 aa)) is disordered. Residues 101 to 126 (GKTEDKSPEAITADLEKASLGDKKAE) are compositionally biased toward basic and acidic residues. A compositionally biased stretch (acidic residues) spans 127 to 139 (DEEEDEGEIDETG). The UBA domain occupies 140–178 (LDPKDIEIVVEQTQVSRAKAVKALRNHDGDMVNAIMDLS).

The protein belongs to the NAC-alpha family. As to quaternary structure, part of the nascent polypeptide-associated complex (NAC), consisting of EGD2 and EGD1. NAC associates with ribosomes via EGD1.

The protein resides in the cytoplasm. The protein localises to the nucleus. Component of the nascent polypeptide-associated complex (NAC), a dynamic component of the ribosomal exit tunnel, protecting the emerging polypeptides from interaction with other cytoplasmic proteins to ensure appropriate nascent protein targeting. The NAC complex also promotes mitochondrial protein import by enhancing productive ribosome interactions with the outer mitochondrial membrane and blocks the inappropriate interaction of ribosomes translating non-secretory nascent polypeptides with translocation sites in the membrane of the endoplasmic reticulum. EGD2 may also be involved in transcription regulation. This is Nascent polypeptide-associated complex subunit alpha (EGD2) from Candida albicans (strain SC5314 / ATCC MYA-2876) (Yeast).